Consider the following 809-residue polypeptide: Plasminogen (809 aa).

Residues 1–19 (MDHKEVVLLLLLFLKSGLG) form the signal peptide. The PAN domain occupies 20–98 (DSLDDYVNTQ…RDVVLFEKRI (79 aa)). Disulfide bonds link C49–C73, C53–C61, C103–C181, C124–C164, C152–C176, C185–C262, C188–C316, C206–C245, C234–C257, C275–C352, C296–C335, C324–C347, C377–C454, C398–C437, C426–C449, C480–C559, C501–C542, C530–C554, C566–C684, C576–C584, C606–C622, C698–C765, C728–C744, and C755–C783. 2 Kringle domains span residues 103–181 (CKTG…IPEC) and 185–262 (CMHC…IPRC). O-linked (GalNAc...) threonine glycosylation occurs at T268. 3 consecutive Kringle domains span residues 275–352 (CLKG…IPSC), 377–454 (CYRG…LKKC), and 480–559 (CMFG…VPQC). An N-linked (GlcNAc...) asparagine glycan is attached at N308. In terms of domain architecture, Peptidase S1 spans 580 to 807 (VVGGCVSIPH…FVTWIEEIMR (228 aa)). At S596 the chain carries Phosphoserine. Active-site charge relay system residues include H621 and D664. S759 (charge relay system) is an active-site residue.

This sequence belongs to the peptidase S1 family. Plasminogen subfamily. Interacts with CSPG4 and AMOT. Interacts (via the Kringle domains) with HRG; the interaction tethers PLG to the cell surface and enhances its activation. Interacts (via Kringle 4 domain) with ADA; the interaction stimulates PLG activation when in complex with DPP4. Angiostatin: Interacts with ATP5F1A; the interaction inhibits most of the angiogenic effects of angiostatin. N-linked glycan contains N-acetyllactosamine, sialic acid and is core fucosylated. O-linked glycans consist of Gal-GalNAc disaccharide which is modified with up to 2 sialic acid residues (microheterogeneity). In terms of processing, in the presence of the inhibitor, the activation involves only cleavage after Arg-579, yielding two chains held together by two disulfide bonds. In the absence of the inhibitor, the activation involves additionally the removal of the activation peptide.

Its subcellular location is the secreted. It catalyses the reaction Preferential cleavage: Lys-|-Xaa &gt; Arg-|-Xaa, higher selectivity than trypsin. Converts fibrin into soluble products.. Its activity is regulated as follows. Converted into plasmin by plasminogen activators, both plasminogen and its activator being bound to fibrin. Cannot be activated with streptokinase. Its function is as follows. Plasmin dissolves the fibrin of blood clots and acts as a proteolytic factor in a variety of other processes including embryonic development, tissue remodeling, tumor invasion, and inflammation. In ovulation, weakens the walls of the Graafian follicle. It activates the urokinase-type plasminogen activator, collagenases and several complement zymogens, such as C1, C4 and C5. Cleavage of fibronectin and laminin leads to cell detachment and apoptosis. Also cleaves fibrin, thrombospondin and von Willebrand factor. Its role in tissue remodeling and tumor invasion may be modulated by CSPG4. Binds to cells. This Sus scrofa (Pig) protein is Plasminogen (PLG).